The following is a 432-amino-acid chain: D-amino acid dehydrogenase (432 aa).

Val-3–Trp-17 contributes to the FAD binding site.

Belongs to the DadA oxidoreductase family. The cofactor is FAD.

The catalysed reaction is a D-alpha-amino acid + A + H2O = a 2-oxocarboxylate + AH2 + NH4(+). It participates in amino-acid degradation; D-alanine degradation; NH(3) and pyruvate from D-alanine: step 1/1. Oxidative deamination of D-amino acids. In Salmonella agona (strain SL483), this protein is D-amino acid dehydrogenase.